Reading from the N-terminus, the 178-residue chain is Cyclin-dependent kinase inhibitor 1B (178 aa).

Over residues 1 to 11 (MSNVRVSNGSP) the composition is skewed to polar residues. Residues 1–31 (MSNVRVSNGSPSLERMDARQAEYPKPSACRN) are disordered. S10 carries the phosphoserine; by UHMK1 modification. Residues 51 to 91 (DMEEASQRKWNFDFQNHKPLEGKYEWQEVEKGSLPEFYYRP) are interaction with CDK2. Phosphotyrosine; by SRC is present on Y74. Residues 87 to 178 (FYYRPPRPPK…RTEENVSDGS (92 aa)) form a disordered region. Y88 is subject to Phosphotyrosine; by ABL, LYN, SRC and JAK2. Residue Y89 is modified to Phosphotyrosine. Residues 104–113 (QESQDVSGTR) are compositionally biased toward polar residues. Residues 126-137 (EDTHLVDQKTDT) show a composition bias toward basic and acidic residues. Residues 153–169 (KRPATDDSSPQNKRANR) carry the Nuclear localization signal motif. At T157 the chain carries Phosphothreonine; by CaMK1, PKB/AKT1, RPS6KA1, RPS6KA3 and PIM1. T170 carries the phosphothreonine modification.

This sequence belongs to the CDI family. As to quaternary structure, forms a ternary complex composed of CCNE1, CDK2 and CDKN1B. Interacts directly with CCNE1; the interaction is inhibited by CDK2-dependent phosphorylation. Interacts with COPS5, subunit of the COP9 signalosome complex; the interaction leads to CDKN1B degradation. Interacts with NUP50; the interaction leads to nuclear import and degradation of phosphorylated CDKN1B. Interacts with CCND1 and SNX6. Interacts (Thr-198-phosphorylated form) with 14-3-3 proteins, binds strongly YWHAQ, weakly YWHAE and YWHAH, but not YWHAB nor YWHAZ; the interaction with YWHAQ results in translocation to the cytoplasm. Interacts with AKT1 and LYN; the interactions lead to cytoplasmic mislocation, phosphorylation of CDKN1B and inhibition of cell cycle arrest. Forms a ternary complex with CCNA2 and CDK2; CDKN1B inhibits the kinase activity of CDK2 through conformational rearrangements. Interacts (unphosphorylated form) with CDK2. Forms a complex with CDK2 and SPDYA, but does not directly interact with SPDYA. Forms a ternary complex composed of cyclin D, CDK4 and CDKN1B. Interacts (phosphorylated on Tyr-88 and Tyr-89) with CDK4; the interaction is required for cyclin D and CDK4 complex assembly, induces nuclear translocation and activates the CDK4 kinase activity. Interacts with GRB2. Interacts with PIM1. Identified in a complex with SKP1, SKP2 and CKS1B. Interacts with UHMK1; the interaction leads to cytoplasmic mislocation, phosphorylation of CDKN1B and inhibition of cell cycle arrest. Also interacts with CDK1. Dephosphorylated by PPM1H, leading to CDKN1B stability. Phosphorylated; phosphorylation occurs on serine, threonine and tyrosine residues. Phosphorylation on Ser-10 is the major site of phosphorylation in resting cells, takes place at the G(0)-G(1) phase and leads to protein stability. Phosphorylation on other sites is greatly enhanced by mitogens, growth factors, MYC and in certain cancer cell lines. The phosphorylated form found in the cytoplasm is inactivate. Phosphorylation on Tyr-88 has no effect on binding CDK complexes. Post-translationally, ubiquitinated; in the cytoplasm by the KPC complex (composed of RNF123/KPC1 and UBAC1/KPC2) and, in the nucleus, by SCF(SKP2). The latter requires prior phosphorylation on Thr-187. Ubiquitinated; by a TRIM21-containing SCF(SKP2)-like complex; leads to its degradation. In terms of processing, subject to degradation in the lysosome. Interaction with SNX6 promotes lysosomal degradation.

Its subcellular location is the nucleus. The protein resides in the cytoplasm. It is found in the endosome. Its function is as follows. Important regulator of cell cycle progression. Inhibits the kinase activity of CDK2 bound to cyclin A, but has little inhibitory activity on CDK2 bound to SPDYA. Involved in G1 arrest. Potent inhibitor of cyclin E- and cyclin A-CDK2 complexes. Forms a complex with cyclin type D-CDK4 complexes and is involved in the assembly, stability, and modulation of CCND1-CDK4 complex activation. Acts either as an inhibitor or an activator of cyclin type D-CDK4 complexes depending on its phosphorylation state and/or stoichometry. In Neovison vison (American mink), this protein is Cyclin-dependent kinase inhibitor 1B (CDKN1B).